A 242-amino-acid polypeptide reads, in one-letter code: Biosynthetic peptidoglycan transglycosylase (242 aa).

The helical transmembrane segment at 21–41 (VALVVFWGGGIALFSVVPVPF) threads the bilayer.

Belongs to the glycosyltransferase 51 family.

Its subcellular location is the cell inner membrane. The catalysed reaction is [GlcNAc-(1-&gt;4)-Mur2Ac(oyl-L-Ala-gamma-D-Glu-L-Lys-D-Ala-D-Ala)](n)-di-trans,octa-cis-undecaprenyl diphosphate + beta-D-GlcNAc-(1-&gt;4)-Mur2Ac(oyl-L-Ala-gamma-D-Glu-L-Lys-D-Ala-D-Ala)-di-trans,octa-cis-undecaprenyl diphosphate = [GlcNAc-(1-&gt;4)-Mur2Ac(oyl-L-Ala-gamma-D-Glu-L-Lys-D-Ala-D-Ala)](n+1)-di-trans,octa-cis-undecaprenyl diphosphate + di-trans,octa-cis-undecaprenyl diphosphate + H(+). It functions in the pathway cell wall biogenesis; peptidoglycan biosynthesis. Functionally, peptidoglycan polymerase that catalyzes glycan chain elongation from lipid-linked precursors. This is Biosynthetic peptidoglycan transglycosylase from Salmonella arizonae (strain ATCC BAA-731 / CDC346-86 / RSK2980).